Consider the following 470-residue polypeptide: L-seryl-tRNA(Sec) selenium transferase (470 aa).

N6-(pyridoxal phosphate)lysine is present on Lys-294.

Belongs to the SelA family. Requires pyridoxal 5'-phosphate as cofactor.

It localises to the cytoplasm. The enzyme catalyses L-seryl-tRNA(Sec) + selenophosphate + H(+) = L-selenocysteinyl-tRNA(Sec) + phosphate. It functions in the pathway aminoacyl-tRNA biosynthesis; selenocysteinyl-tRNA(Sec) biosynthesis; selenocysteinyl-tRNA(Sec) from L-seryl-tRNA(Sec) (bacterial route): step 1/1. Converts seryl-tRNA(Sec) to selenocysteinyl-tRNA(Sec) required for selenoprotein biosynthesis. The chain is L-seryl-tRNA(Sec) selenium transferase from Solidesulfovibrio magneticus (strain ATCC 700980 / DSM 13731 / RS-1) (Desulfovibrio magneticus).